The sequence spans 379 residues: 2-nitroimidazole nitrohydrolase (379 aa).

Catalysis depends on C357, which acts as the Amidino-cysteine intermediate.

Belongs to the arginine deiminase family.

It catalyses the reaction 2-nitroimidazole + H2O = 1,3-dihydro-2H-imidazol-2-one + nitrite + H(+). In terms of biological role, involved in the biodegradation of 2-Nitroimidazole (2NI) which is a natural antibiotic and an analog of the synthetic nitroimidazoles used for treatment of tuberculosis, Chagas disease (also called American Trypanosomiasis) and cancer. Catalyzes the hydrolytic denitration of 2NI to produce imidazol-2-one and nitrite. It is also active against the 2NI synthetic derivative benznidazole. NnhA confers drug resistance to 2NI. The chain is 2-nitroimidazole nitrohydrolase (nnhA) from Mycobacterium sp. (strain JS330).